Consider the following 407-residue polypeptide: Chorismate synthase (407 aa).

NADP(+)-binding residues include arginine 43 and arginine 49. FMN-binding positions include 143-145, 264-265, glycine 308, 323-327, and arginine 349; these read RSS, QA, and KPIST.

It belongs to the chorismate synthase family. As to quaternary structure, homotetramer. FMNH2 is required as a cofactor.

The catalysed reaction is 5-O-(1-carboxyvinyl)-3-phosphoshikimate = chorismate + phosphate. It participates in metabolic intermediate biosynthesis; chorismate biosynthesis; chorismate from D-erythrose 4-phosphate and phosphoenolpyruvate: step 7/7. Its function is as follows. Catalyzes the anti-1,4-elimination of the C-3 phosphate and the C-6 proR hydrogen from 5-enolpyruvylshikimate-3-phosphate (EPSP) to yield chorismate, which is the branch point compound that serves as the starting substrate for the three terminal pathways of aromatic amino acid biosynthesis. This reaction introduces a second double bond into the aromatic ring system. The polypeptide is Chorismate synthase (Corynebacterium efficiens (strain DSM 44549 / YS-314 / AJ 12310 / JCM 11189 / NBRC 100395)).